Consider the following 267-residue polypeptide: Small ribosomal subunit protein uS2 (267 aa).

Residues 226-267 (AAAPNSASVREEEFSAESADEGKGRRAPAKKGEKKADAPAAE) are disordered. Positions 245–267 (DEGKGRRAPAKKGEKKADAPAAE) are enriched in basic and acidic residues.

This sequence belongs to the universal ribosomal protein uS2 family.

The protein is Small ribosomal subunit protein uS2 of Xanthomonas oryzae pv. oryzae (strain MAFF 311018).